The following is a 277-amino-acid chain: S-formylglutathione hydrolase FrmB (277 aa).

Residues Ser145, Asp221, and His254 each act as charge relay system in the active site.

This sequence belongs to the esterase D family.

It carries out the reaction S-formylglutathione + H2O = formate + glutathione + H(+). Functionally, serine hydrolase involved in the detoxification of formaldehyde. Hydrolyzes S-formylglutathione to glutathione and formate. This is S-formylglutathione hydrolase FrmB (frmB) from Escherichia coli O6:H1 (strain CFT073 / ATCC 700928 / UPEC).